The sequence spans 308 residues: MGNTLGLAPMGTLPRRSHRREEPLPNPGSFDELHRLCKDVFPAQMEGVKLVVNKVLSSHFQVAHTVHMSALGLPGYHLHTAYAGDWQLSPTEVFPTVVGDMDSSGSLNAQVLLLLAERLRAKAVFQTQQAKFLTWQFDGEYRGDDYTATLTLGNPDLIGESVIMVAHFLQSITHRLVLGGELVYHRRPGEEGAILTLAGKYSAVHWVATLNVGSGGAHASYYHKANEQVQVGVEFEANTRLQDTTFSFGYHLTLPQADMVFRGLVDSNWCVGAVLEKKMRPLPVTLALGAFLNHWRNRFHCGFSITVG.

Residues methionine 1–serine 29 form a disordered region. The tract at residues proline 281 to glycine 308 is required for mitochondrial targeting.

This sequence belongs to the Tom40 family. In terms of assembly, forms part of the preprotein translocase of the outer mitochondrial membrane (TOM complex) containing TOMM22, TOMM40, TOMM40L and TOMM70. Interacts with mitochondrial targeting sequences.

It is found in the mitochondrion outer membrane. In terms of biological role, potential channel-forming protein implicated in import of protein precursors into mitochondria. The sequence is that of Mitochondrial import receptor subunit TOM40B (Tomm40l) from Mus musculus (Mouse).